The sequence spans 126 residues: Fatty acid-binding protein 1, liver (126 aa).

The protein belongs to the calycin superfamily. Fatty-acid binding protein (FABP) family.

It is found in the cytoplasm. Its function is as follows. Binds free fatty acids and their coenzyme A derivatives, bilirubin, and some other small molecules in the cytoplasm. May be involved in intracellular lipid transport. The specificity of axolotl L-FABP differs from that of LB-FABP. In Ambystoma mexicanum (Axolotl), this protein is Fatty acid-binding protein 1, liver.